A 250-amino-acid chain; its full sequence is 5'-nucleotidase SurE (250 aa).

A divalent metal cation contacts are provided by D8, D9, S39, and N91.

It belongs to the SurE nucleotidase family. Requires a divalent metal cation as cofactor.

It is found in the cytoplasm. It carries out the reaction a ribonucleoside 5'-phosphate + H2O = a ribonucleoside + phosphate. In terms of biological role, nucleotidase that shows phosphatase activity on nucleoside 5'-monophosphates. The protein is 5'-nucleotidase SurE of Leptospira borgpetersenii serovar Hardjo-bovis (strain JB197).